Here is an 88-residue protein sequence, read N- to C-terminus: DNA-directed RNA polymerase subunit omega (88 aa).

It belongs to the RNA polymerase subunit omega family. As to quaternary structure, the RNAP catalytic core consists of 2 alpha, 1 beta, 1 beta' and 1 omega subunit. When a sigma factor is associated with the core the holoenzyme is formed, which can initiate transcription.

The catalysed reaction is RNA(n) + a ribonucleoside 5'-triphosphate = RNA(n+1) + diphosphate. In terms of biological role, promotes RNA polymerase assembly. Latches the N- and C-terminal regions of the beta' subunit thereby facilitating its interaction with the beta and alpha subunits. The polypeptide is DNA-directed RNA polymerase subunit omega (Anaeromyxobacter sp. (strain Fw109-5)).